A 421-amino-acid polypeptide reads, in one-letter code: Tyrosine--tRNA ligase (421 aa).

Position 36 (Tyr-36) interacts with L-tyrosine. The 'HIGH' region signature appears at 41 to 50 (PTADSLHIGH). L-tyrosine is bound by residues Tyr-170 and Gln-174. The short motif at 231–235 (KFGKS) is the 'KMSKS' region element. Residue Lys-234 participates in ATP binding. In terms of domain architecture, S4 RNA-binding spans 353-420 (TNIVEALIET…KKKYFMVNYQ (68 aa)).

Belongs to the class-I aminoacyl-tRNA synthetase family. TyrS type 1 subfamily. As to quaternary structure, homodimer.

It localises to the cytoplasm. It carries out the reaction tRNA(Tyr) + L-tyrosine + ATP = L-tyrosyl-tRNA(Tyr) + AMP + diphosphate + H(+). Catalyzes the attachment of tyrosine to tRNA(Tyr) in a two-step reaction: tyrosine is first activated by ATP to form Tyr-AMP and then transferred to the acceptor end of tRNA(Tyr). This Staphylococcus epidermidis (strain ATCC 35984 / DSM 28319 / BCRC 17069 / CCUG 31568 / BM 3577 / RP62A) protein is Tyrosine--tRNA ligase.